The primary structure comprises 126 residues: Large-conductance mechanosensitive channel (126 aa).

Transmembrane regions (helical) follow at residues 8–28 and 70–90; these read FAMRGNVIDLAVAVVLGAAFT and IQQIVSFFLIAIALFLIVKVI.

It belongs to the MscL family. Homopentamer.

It localises to the cell membrane. Functionally, channel that opens in response to stretch forces in the membrane lipid bilayer. May participate in the regulation of osmotic pressure changes within the cell. This is Large-conductance mechanosensitive channel from Exiguobacterium sp. (strain ATCC BAA-1283 / AT1b).